The primary structure comprises 846 residues: Inactive cap-specific mRNA (nucleoside-2'-O-)-methyltransferase 1B (846 aa).

The interval Asp-30–Lys-50 is disordered. In terms of domain architecture, G-patch spans Gln-44–Trp-90. One can recognise a RrmJ-type SAM-dependent 2'-O-MTase domain in the interval Phe-184–Arg-413.

In Caenorhabditis briggsae, this protein is Inactive cap-specific mRNA (nucleoside-2'-O-)-methyltransferase 1B.